Reading from the N-terminus, the 449-residue chain is Phosphomannomutase (449 aa).

Residue serine 97 is the Phosphoserine intermediate of the active site. Residues serine 97, aspartate 237, aspartate 239, and aspartate 241 each contribute to the Mg(2+) site.

This sequence belongs to the phosphohexose mutase family. Mg(2+) serves as cofactor.

The catalysed reaction is alpha-D-mannose 1-phosphate = D-mannose 6-phosphate. The protein operates within amino-acid biosynthesis. In terms of biological role, catalyzes the formation of mannose-1-P from mannose-6-P. Can also use glucose-6-P. The polypeptide is Phosphomannomutase (manB) (Methanocaldococcus jannaschii (strain ATCC 43067 / DSM 2661 / JAL-1 / JCM 10045 / NBRC 100440) (Methanococcus jannaschii)).